Reading from the N-terminus, the 1201-residue chain is Putative disease resistance protein At4g19050 (1201 aa).

33–40 serves as a coordination point for ATP; sequence GEAGIGKT. LRR repeat units follow at residues 469 to 491, 492 to 514, 517 to 539, 540 to 562, 680 to 701, 703 to 725, 726 to 748, 750 to 771, 773 to 795, 796 to 818, 820 to 841, 843 to 865, 866 to 888, and 890 to 911; these read KLRVLVIRDCDLIDNIDKLSGLQ, GLHVLEVSGASSLVNIPDDFFKN, QLQSLNLSGLAIKSSPSTIEKLS, MLRCFILRHCSELQDLPNFIVET, ELRILDMSKTSLPELADTIADV, NLNKLLLRNCSLIEELPSIEKLT, HLEVFDVSGCIKLKNINGSFGEM, YLHEVNLSETNLSELPDKISEL, NLKELIIRKCSKLKTLPNLEKLT, NLEIFDVSGCTELETIEGSFENL, CLHKVNLSETNLGELPNKISEL, NLKELILRNCSKLKALPNLEKLT, HLVIFDVSGCTNLDKIEESFESM, and YLCEVNLSGTNLKTFPELPKQS. The span at 1162–1180 shows a compositional bias: basic and acidic residues; it reads DEPRIGARITDEISEDQPH. The interval 1162 to 1201 is disordered; that stretch reads DEPRIGARITDEISEDQPHKNTIGPETQTPTQPTKATDTV. Over residues 1185–1201 the composition is skewed to polar residues; that stretch reads GPETQTPTQPTKATDTV.

This sequence belongs to the disease resistance NB-LRR family.

Functionally, potential disease resistance protein. The sequence is that of Putative disease resistance protein At4g19050 from Arabidopsis thaliana (Mouse-ear cress).